The following is a 90-amino-acid chain: Large ribosomal subunit protein eL37 (90 aa).

Residues Asn13–Ser46 form an A20-type zinc finger. Zn(2+) contacts are provided by Cys19, Cys22, Cys34, and Cys37.

It belongs to the eukaryotic ribosomal protein eL37 family. In terms of assembly, component of the large ribosomal subunit. Mature ribosomes consist of a small (40S) and a large (60S) subunit. The 40S subunit contains about 32 different proteins and 1 molecule of RNA (18S). The 60S subunit contains 45 different proteins and 3 molecules of RNA (25S, 5.8S and 5S). It depends on Zn(2+) as a cofactor.

It localises to the cytoplasm. In terms of biological role, component of the ribosome, a large ribonucleoprotein complex responsible for the synthesis of proteins in the cell. The small ribosomal subunit (SSU) binds messenger RNAs (mRNAs) and translates the encoded message by selecting cognate aminoacyl-transfer RNA (tRNA) molecules. The large subunit (LSU) contains the ribosomal catalytic site termed the peptidyl transferase center (PTC), which catalyzes the formation of peptide bonds, thereby polymerizing the amino acids delivered by tRNAs into a polypeptide chain. The nascent polypeptides leave the ribosome through a tunnel in the LSU and interact with protein factors that function in enzymatic processing, targeting, and the membrane insertion of nascent chains at the exit of the ribosomal tunnel. This chain is Large ribosomal subunit protein eL37, found in Candida albicans (strain SC5314 / ATCC MYA-2876) (Yeast).